Consider the following 195-residue polypeptide: uncharacterized protein (195 aa).

A Nudix hydrolase domain is found at 34-165 (SHHAAVLIPI…WLDIHRGGVN (132 aa)). Positions 72 to 94 (GKADPQDSSLIETALREAEEEVA) match the Nudix box motif. Residues Glu-88 and Glu-92 each coordinate Mg(2+).

Belongs to the Nudix hydrolase family. PCD1 subfamily. The cofactor is Mn(2+). Mg(2+) is required as a cofactor.

Probably mediates the hydrolysis of some nucleoside diphosphate derivatives. This is an uncharacterized protein from Yersinia enterocolitica serotype O:8 / biotype 1B (strain NCTC 13174 / 8081).